The following is a 214-amino-acid chain: ATP-dependent Clp protease proteolytic subunit (214 aa).

Catalysis depends on Ser-110, which acts as the Nucleophile. His-135 is a catalytic residue.

This sequence belongs to the peptidase S14 family. As to quaternary structure, fourteen ClpP subunits assemble into 2 heptameric rings which stack back to back to give a disk-like structure with a central cavity, resembling the structure of eukaryotic proteasomes.

The protein localises to the cytoplasm. It catalyses the reaction Hydrolysis of proteins to small peptides in the presence of ATP and magnesium. alpha-casein is the usual test substrate. In the absence of ATP, only oligopeptides shorter than five residues are hydrolyzed (such as succinyl-Leu-Tyr-|-NHMec, and Leu-Tyr-Leu-|-Tyr-Trp, in which cleavage of the -Tyr-|-Leu- and -Tyr-|-Trp bonds also occurs).. In terms of biological role, cleaves peptides in various proteins in a process that requires ATP hydrolysis. Has a chymotrypsin-like activity. Plays a major role in the degradation of misfolded proteins. This chain is ATP-dependent Clp protease proteolytic subunit, found in Legionella pneumophila (strain Corby).